Reading from the N-terminus, the 841-residue chain is Rho guanine nucleotide exchange factor 15 (841 aa).

Disordered regions lie at residues 1–179 (MSAQ…QARA), 239–261 (RRAS…HPAV), and 279–333 (KPPK…REEE). Residues 39-53 (NGSSPQELPRNSNDA) show a composition bias toward polar residues. A compositionally biased stretch (low complexity) spans 65-110 (PPAASLKPPALLPPSASRASLDSQTSPDSPSSTPTPSPVSRRSASP). 2 positions are modified to phosphoserine: serine 107 and serine 109. Residues 111 to 124 (EPAPRSPVPPPKPS) are compositionally biased toward pro residues. Tyrosine 353 is subject to Phosphotyrosine; by EPHB2. One can recognise a DH domain in the interval 417 to 601 (RMQESLFEVV…SKIIERCSAE (185 aa)). Residues 765–793 (ESSAPAKTEGRSLESRAAPKHLHKTPEGW) form a disordered region.

In terms of assembly, interacts with EPHB2. Interacts with EPHA4. Post-translationally, phosphorylated on tyrosine residues upon EFNA1 stimulation. EPHB2-dependent phosphorylation at Tyr-353 triggers UBE3A-mediated ubiquitination. Ubiquitinated; UBE3A-mediated ubiquitination and degradation by the proteasome promotes EFNB1-dependent synapse formation. As to expression, expressed in the vascular smooth muscle of coronary artery.

The protein resides in the cell projection. It localises to the dendrite. Functionally, specific GEF for RhoA activation. Does not activate RAC1 or CDC42. Regulates vascular smooth muscle contractility. Negatively regulates excitatory synapse development by suppressing the synapse-promoting activity of EPHB2. The polypeptide is Rho guanine nucleotide exchange factor 15 (ARHGEF15) (Homo sapiens (Human)).